A 44-amino-acid chain; its full sequence is DNA-directed RNA polymerase subunit Rpo12 (44 aa).

Residues Cys8, Cys22, and Cys25 each coordinate Zn(2+).

The protein belongs to the archaeal Rpo12/eukaryotic RPC10 RNA polymerase subunit family. Part of the RNA polymerase complex. It depends on Zn(2+) as a cofactor.

It is found in the cytoplasm. The catalysed reaction is RNA(n) + a ribonucleoside 5'-triphosphate = RNA(n+1) + diphosphate. Its function is as follows. DNA-dependent RNA polymerase (RNAP) catalyzes the transcription of DNA into RNA using the four ribonucleoside triphosphates as substrates. In Halobacterium salinarum (strain ATCC 29341 / DSM 671 / R1), this protein is DNA-directed RNA polymerase subunit Rpo12.